The chain runs to 742 residues: Conidiogenone synthase (742 aa).

Positions Met1 to Val332 are terpene cyclase. Position 97 (Asp97) interacts with Mg(2+). Substrate is bound by residues Asp97, Arg190–Asp193, Asn234, Ser238–Glu242, and Arg328–Tyr329. Residues Asp97–Asp101 carry the DDXXD 1 motif. The NSE/DTE signature appears at Asn234–Glu242. The tract at residues Glu333–Lys742 is prenyltransferase. Positions 414, 417, and 446 each coordinate isopentenyl diphosphate. Mg(2+)-binding residues include Asp453 and Asp457. The short motif at Asp453 to Asp457 is the DDXXD 2 element. Dimethylallyl diphosphate is bound at residue Arg462. Position 463 (Arg463) interacts with isopentenyl diphosphate. Dimethylallyl diphosphate is bound by residues Lys539, Thr540, Gln575, Asn582, Lys592, and Lys602. Residues Glu701 to Gly724 form a disordered region.

In the N-terminal section; belongs to the terpene synthase family. The protein in the C-terminal section; belongs to the FPP/GGPP synthase family. As to quaternary structure, hexamer. Requires Mg(2+) as cofactor.

The enzyme catalyses isopentenyl diphosphate + (2E,6E)-farnesyl diphosphate = (2E,6E,10E)-geranylgeranyl diphosphate + diphosphate. It participates in secondary metabolite biosynthesis; terpenoid biosynthesis. Its function is as follows. Bifunctional terpene synthase; part of the gene cluster that mediates the biosynthesis of conidiogenone, a diterpene known to induce the conidiation. The bifunctional terpene synthase PrDS converts isopentenyl diphosphate (IPP) and dimethylallyl diphosphate (DMAPP) into deoxyconidiogenol. The C-terminal prenyltransferase (PT) domain of PrDS catalyzes formation of GGPP, whereas the N-terminal terpene cyclase (TC) domain catalyzes the cyclization of GGPP into deoxyconidiogenol. The cytochrome P450 monooxygenase PrP450 then catalyzes two rounds of oxidation to furnish conidiogenone. The polypeptide is Conidiogenone synthase (Penicillium roqueforti (strain FM164)).